Here is a 499-residue protein sequence, read N- to C-terminus: Pentatricopeptide repeat-containing protein At5g61800 (499 aa).

PPR repeat units lie at residues 78–113 (STFC…SVPP), 114–150 (DFHT…GLLS), 151–181 (DLFT…NPQR), 182–212 (DVVT…MPLR), 213–247 (DLVS…GLKP), 248–282 (DNVA…RLFI), 283–313 (DSFL…CSDK), 314–348 (TLFT…GIKP), 349–379 (DGVT…MRSL), and 385–419 (EMKH…GGNR). A type E motif region spans residues 424–499 (AWSGLLGGCR…KNVGFSKVLS (76 aa)).

This sequence belongs to the PPR family. PCMP-E subfamily.

In Arabidopsis thaliana (Mouse-ear cress), this protein is Pentatricopeptide repeat-containing protein At5g61800 (PCMP-E8).